The primary structure comprises 208 residues: Protein-L-isoaspartate O-methyltransferase (208 aa).

Ser59 is a catalytic residue.

It belongs to the methyltransferase superfamily. L-isoaspartyl/D-aspartyl protein methyltransferase family.

The protein resides in the cytoplasm. The enzyme catalyses [protein]-L-isoaspartate + S-adenosyl-L-methionine = [protein]-L-isoaspartate alpha-methyl ester + S-adenosyl-L-homocysteine. Functionally, catalyzes the methyl esterification of L-isoaspartyl residues in peptides and proteins that result from spontaneous decomposition of normal L-aspartyl and L-asparaginyl residues. It plays a role in the repair and/or degradation of damaged proteins. This Yersinia enterocolitica serotype O:8 / biotype 1B (strain NCTC 13174 / 8081) protein is Protein-L-isoaspartate O-methyltransferase.